Reading from the N-terminus, the 224-residue chain is Orotate phosphoribosyltransferase (224 aa).

Lysine 29 serves as a coordination point for 5-phospho-alpha-D-ribose 1-diphosphate. 37–38 provides a ligand contact to orotate; the sequence is FF. Residues 75 to 76, arginine 105, lysine 106, lysine 109, histidine 111, and 130 to 138 contribute to the 5-phospho-alpha-D-ribose 1-diphosphate site; these read YK and DDVITAGTS. Positions 134 and 162 each coordinate orotate.

Belongs to the purine/pyrimidine phosphoribosyltransferase family. PyrE subfamily. As to quaternary structure, homodimer. The cofactor is Mg(2+).

The enzyme catalyses orotidine 5'-phosphate + diphosphate = orotate + 5-phospho-alpha-D-ribose 1-diphosphate. Its pathway is pyrimidine metabolism; UMP biosynthesis via de novo pathway; UMP from orotate: step 1/2. In terms of biological role, catalyzes the transfer of a ribosyl phosphate group from 5-phosphoribose 1-diphosphate to orotate, leading to the formation of orotidine monophosphate (OMP). This chain is Orotate phosphoribosyltransferase, found in Bordetella parapertussis (strain 12822 / ATCC BAA-587 / NCTC 13253).